Consider the following 229-residue polypeptide: 7-cyano-7-deazaguanine synthase (229 aa).

9–19 provides a ligand contact to ATP; the sequence is LSGGLDSTTVL. Zn(2+) contacts are provided by Cys-192, Cys-202, Cys-205, and Cys-208.

This sequence belongs to the QueC family. Zn(2+) is required as a cofactor.

It catalyses the reaction 7-carboxy-7-deazaguanine + NH4(+) + ATP = 7-cyano-7-deazaguanine + ADP + phosphate + H2O + H(+). It participates in purine metabolism; 7-cyano-7-deazaguanine biosynthesis. Functionally, catalyzes the ATP-dependent conversion of 7-carboxy-7-deazaguanine (CDG) to 7-cyano-7-deazaguanine (preQ(0)). The chain is 7-cyano-7-deazaguanine synthase from Kineococcus radiotolerans (strain ATCC BAA-149 / DSM 14245 / SRS30216).